The primary structure comprises 100 residues: NAD(P)H-quinone oxidoreductase subunit 4L, chloroplastic (100 aa).

3 consecutive transmembrane segments (helical) span residues 1-21, 29-49, and 63-83; these read MIENALILGAYLFCIGFYGLI, ALMCLELIFNAVNINFVTFSN, and ISVIAIAAAEAAIGLSIILII.

The protein belongs to the complex I subunit 4L family. NDH is composed of at least 16 different subunits, 5 of which are encoded in the nucleus.

It localises to the plastid. It is found in the chloroplast thylakoid membrane. The enzyme catalyses a plastoquinone + NADH + (n+1) H(+)(in) = a plastoquinol + NAD(+) + n H(+)(out). The catalysed reaction is a plastoquinone + NADPH + (n+1) H(+)(in) = a plastoquinol + NADP(+) + n H(+)(out). NDH shuttles electrons from NAD(P)H:plastoquinone, via FMN and iron-sulfur (Fe-S) centers, to quinones in the photosynthetic chain and possibly in a chloroplast respiratory chain. The immediate electron acceptor for the enzyme in this species is believed to be plastoquinone. Couples the redox reaction to proton translocation, and thus conserves the redox energy in a proton gradient. This is NAD(P)H-quinone oxidoreductase subunit 4L, chloroplastic from Angiopteris evecta (Mule's foot fern).